The following is a 645-amino-acid chain: Chaperone protein DnaK (645 aa).

The residue at position 200 (T200) is a Phosphothreonine; by autocatalysis. Residues 603–645 (AYSAQKDSGTSTDSTASDTSGNPEERVVDSEYQEIKKDDEDKK) are disordered. The span at 609-623 (DSGTSTDSTASDTSG) shows a compositional bias: low complexity. Residues 625–645 (PEERVVDSEYQEIKKDDEDKK) show a composition bias toward basic and acidic residues.

The protein belongs to the heat shock protein 70 family.

Its function is as follows. Acts as a chaperone. The polypeptide is Chaperone protein DnaK (Anaplasma marginale (strain St. Maries)).